The chain runs to 331 residues: Protoheme IX farnesyltransferase (331 aa).

Transmembrane regions (helical) follow at residues 63 to 83, 109 to 129, 132 to 152, 160 to 180, 188 to 208, 215 to 235, 241 to 261, and 294 to 314; these read LACTLGGGALAAAAAGALNCL, SVFIGAVACTLVSSALLVSGV, LAAGLTLLGLCSYVLLYTAFL, IVFGGVAGAIPPLVGASAAAG, WLFSLVMVWTPAHFWALAILL, VGIPMLPTVSGPFVTAKAISV, VFLSFLGCFVLPEGGLLYGIL, and ILYMFGVCFLLVISRLQVSIV.

Belongs to the UbiA prenyltransferase family. Protoheme IX farnesyltransferase subfamily.

The protein localises to the cell inner membrane. The enzyme catalyses heme b + (2E,6E)-farnesyl diphosphate + H2O = Fe(II)-heme o + diphosphate. The protein operates within porphyrin-containing compound metabolism; heme O biosynthesis; heme O from protoheme: step 1/1. In terms of biological role, converts heme B (protoheme IX) to heme O by substitution of the vinyl group on carbon 2 of heme B porphyrin ring with a hydroxyethyl farnesyl side group. The chain is Protoheme IX farnesyltransferase from Prochlorococcus marinus (strain NATL2A).